A 92-amino-acid chain; its full sequence is uncharacterized protein (92 aa).

This is an uncharacterized protein from Treponema pallidum (strain Nichols).